The primary structure comprises 158 residues: NAD(P)H-quinone oxidoreductase subunit J, chloroplastic (158 aa).

The protein belongs to the complex I 30 kDa subunit family. As to quaternary structure, NDH is composed of at least 16 different subunits, 5 of which are encoded in the nucleus.

It localises to the plastid. Its subcellular location is the chloroplast thylakoid membrane. It carries out the reaction a plastoquinone + NADH + (n+1) H(+)(in) = a plastoquinol + NAD(+) + n H(+)(out). It catalyses the reaction a plastoquinone + NADPH + (n+1) H(+)(in) = a plastoquinol + NADP(+) + n H(+)(out). Its function is as follows. NDH shuttles electrons from NAD(P)H:plastoquinone, via FMN and iron-sulfur (Fe-S) centers, to quinones in the photosynthetic chain and possibly in a chloroplast respiratory chain. The immediate electron acceptor for the enzyme in this species is believed to be plastoquinone. Couples the redox reaction to proton translocation, and thus conserves the redox energy in a proton gradient. This Drimys granadensis protein is NAD(P)H-quinone oxidoreductase subunit J, chloroplastic.